Consider the following 527-residue polypeptide: Phosphoenolpyruvate carboxykinase (ATP) (527 aa).

Substrate contacts are provided by Arg56, Tyr192, and Lys198. ATP-binding positions include Lys198, His217, and 233 to 241 (GLSGTGKTT). Positions 198 and 217 each coordinate Mn(2+). Asp254 is a binding site for Mn(2+). Glu282, Arg319, and Thr444 together coordinate ATP. A substrate-binding site is contributed by Arg319.

This sequence belongs to the phosphoenolpyruvate carboxykinase (ATP) family. Mn(2+) serves as cofactor.

It is found in the cytoplasm. The catalysed reaction is oxaloacetate + ATP = phosphoenolpyruvate + ADP + CO2. The protein operates within carbohydrate biosynthesis; gluconeogenesis. Functionally, involved in the gluconeogenesis. Catalyzes the conversion of oxaloacetate (OAA) to phosphoenolpyruvate (PEP) through direct phosphoryl transfer between the nucleoside triphosphate and OAA. This chain is Phosphoenolpyruvate carboxykinase (ATP), found in Bacillus velezensis (strain DSM 23117 / BGSC 10A6 / LMG 26770 / FZB42) (Bacillus amyloliquefaciens subsp. plantarum).